Reading from the N-terminus, the 174-residue chain is Glutaredoxin-C5, chloroplastic (174 aa).

The transit peptide at 1-51 directs the protein to the chloroplast; it reads MAVTAFNTLKLVSSSLDPIPSVSCSSYSFSLIYVGSPYKRCLKQSCSVRAM. Thr52 is subject to N-acetylthreonine. At Cys90 the chain carries S-glutathionyl cysteine; partial. Cys90 and Cys93 are joined by a disulfide. One can recognise a Glutaredoxin domain in the interval 93-171; sequence CTEVKTLFKR…LMLAEANGKN (79 aa). Val135, Cys148, and Thr149 together coordinate glutathione. Cys148 carries the post-translational modification S-glutathionyl cysteine; partial.

Belongs to the glutaredoxin family. CPYC subfamily. As to quaternary structure, monomeric apoprotein and homodimeric holoprotein containing a [2Fe-2S] cluster. No in vitro interactions with SUFE1, BOLA1, BOLA2 or BOLA4. Post-translationally, glutathionylated.

Its subcellular location is the plastid. The protein localises to the chloroplast. Functionally, has a glutathione-disulfide oxidoreductase activity in the presence of NADPH and glutathione reductase. Reduces low molecular weight disulfides and proteins. Can assemble a [2Fe-2S] cluster, but cannot transfer it to an apoferredoxin. The sequence is that of Glutaredoxin-C5, chloroplastic from Arabidopsis thaliana (Mouse-ear cress).